The sequence spans 140 residues: Large ribosomal subunit protein uL16 (140 aa).

Positions 1-17 are enriched in basic residues; that stretch reads MPLMPKRVKHRKMHRGS. A disordered region spans residues 1–21; that stretch reads MPLMPKRVKHRKMHRGSRSGN.

It belongs to the universal ribosomal protein uL16 family. Part of the 50S ribosomal subunit.

Binds 23S rRNA and is also seen to make contacts with the A and possibly P site tRNAs. The sequence is that of Large ribosomal subunit protein uL16 from Akkermansia muciniphila (strain ATCC BAA-835 / DSM 22959 / JCM 33894 / BCRC 81048 / CCUG 64013 / CIP 107961 / Muc).